We begin with the raw amino-acid sequence, 265 residues long: Adenosylcobinamide-GDP ribazoletransferase (265 aa).

The next 7 helical transmembrane spans lie at 40 to 60 (IAYAIPLAGAVIGLIGAVVLV), 67 to 87 (LPAFLASVLAVTALVLTTGAF), 121 to 141 (GGCALILALLLRVAALEALVA), 150 to 170 (LALVVAEAASRAAGVLLLLAL), 191 to 211 (LACALVAALLVVVILVPGFGI), 213 to 233 (TAFAGLIAPLVALFAMMRLSG), and 243 to 263 (VAGATQQVAVIVFLLGVLIFP).

This sequence belongs to the CobS family. The cofactor is Mg(2+).

It is found in the cell inner membrane. It carries out the reaction alpha-ribazole + adenosylcob(III)inamide-GDP = adenosylcob(III)alamin + GMP + H(+). The catalysed reaction is alpha-ribazole 5'-phosphate + adenosylcob(III)inamide-GDP = adenosylcob(III)alamin 5'-phosphate + GMP + H(+). The protein operates within cofactor biosynthesis; adenosylcobalamin biosynthesis; adenosylcobalamin from cob(II)yrinate a,c-diamide: step 7/7. In terms of biological role, joins adenosylcobinamide-GDP and alpha-ribazole to generate adenosylcobalamin (Ado-cobalamin). Also synthesizes adenosylcobalamin 5'-phosphate from adenosylcobinamide-GDP and alpha-ribazole 5'-phosphate. The chain is Adenosylcobinamide-GDP ribazoletransferase from Xanthobacter autotrophicus (strain ATCC BAA-1158 / Py2).